We begin with the raw amino-acid sequence, 355 residues long: MNRGANSASIPNDLILEILSRLPAKSTGRFRCVSKLWGSMLCHSYFTELFLTRSSARPRLLIGIHQDGDRFFFSCPQPQSPYDNSSIVLAADFHMKFGRVEDEWVYHILTLGTENVRWREIICPFSYDPPREKPICINGVLYYISVGSYYSLIGCFDVRSEKFKFLYLSPDCFPNWSRKLINYKGKLGVTIMEDYHGGFPLKLRMWVLEDVEKEEWTRYAYTLRPENKVEDNDYVYVVGATASGEIVLTKQNAYKPFYVFYFSPERNTLLSVEIQGVGEEWFYHNVYYFVDHVEDLRFDVMKTTYAGTSRSPPKQSTSTSSREDHEVRTLAHQKEDRLTFESVNQFDALRLLEDD.

One can recognise an F-box domain in the interval Gly-4–Leu-49. The span at Ala-306–Ser-320 shows a compositional bias: polar residues. The tract at residues Ala-306–Gln-333 is disordered. The segment covering Ser-321–Gln-333 has biased composition (basic and acidic residues).

This Arabidopsis thaliana (Mouse-ear cress) protein is F-box protein At1g31080.